Consider the following 1425-residue polypeptide: Protein NAP1 (1425 aa).

3 stretches are compositionally biased toward polar residues: residues 1-20, 1299-1312, and 1320-1329; these read MANS…PTSV, TPLS…SPSV, and SMKNSTTPQR. 2 disordered regions span residues 1 to 24 and 1299 to 1425; these read MANS…RSRE and TPLS…KQHN. Residues 1362 to 1405 show a composition bias toward low complexity; it reads SETGNSRNNENNNNNKQRGSSRRSGPLDYSSSHKGGSGSNSTGP.

Belongs to the HEM-1/HEM-2 family. As to quaternary structure, binds PIR. As to expression, expressed in roots, root hairs, hypocotyls, cotyledons, stems, leaves, trichomes, and flowers.

Functionally, involved in regulation of actin and microtubule organization. Part of a WAVE complex that activates the Arp2/3 complex. This Arabidopsis thaliana (Mouse-ear cress) protein is Protein NAP1 (NAP1).